Consider the following 184-residue polypeptide: Bcl-2-modifying factor (184 aa).

Positions 67 to 75 (DKATQTLSP) are interaction with DLC2. The BH3 signature appears at 133–147 (IARKLQCIADQFHRL).

It belongs to the Bcl-2 family. As to quaternary structure, interacts with MCL1, BCL2, BCL2L1/BCL-Xl, BCL2A1 and BCL2L2/BCL-w. Interacts with the myosin V actin motor complex through its binding to DLC2. Isoform 1 is mainly expressed in B-lymphoid cells. Isoform 2 and isoform 3 are mainly expressed in B-CLL and normal B-cells.

Functionally, may play a role in apoptosis. Isoform 1 seems to be the main initiator. In Homo sapiens (Human), this protein is Bcl-2-modifying factor (BMF).